Consider the following 179-residue polypeptide: Probable galaptin lec-7 (179 aa).

The Galectin domain occupies 11 to 138 (SVYQIEENLK…SVDIESIVFK (128 aa)).

This is Probable galaptin lec-7 (lec-7) from Caenorhabditis elegans.